We begin with the raw amino-acid sequence, 92 residues long: Small ribosomal subunit protein uS19c (92 aa).

It belongs to the universal ribosomal protein uS19 family.

The protein localises to the plastid. It is found in the chloroplast. Functionally, protein S19 forms a complex with S13 that binds strongly to the 16S ribosomal RNA. This chain is Small ribosomal subunit protein uS19c, found in Guizotia abyssinica (Niger).